The following is a 461-amino-acid chain: Phosphomethylpyrimidine synthase (461 aa).

Substrate is bound by residues asparagine 80, methionine 109, tyrosine 139, histidine 174, 194 to 196 (SRG), 235 to 238 (DSLR), and glutamate 274. Histidine 278 contacts Zn(2+). Substrate is bound at residue tyrosine 301. Residue histidine 342 participates in Zn(2+) binding. Residues cysteine 422, cysteine 425, and cysteine 430 each coordinate [4Fe-4S] cluster.

It belongs to the ThiC family. Homodimer. The cofactor is [4Fe-4S] cluster.

It catalyses the reaction 5-amino-1-(5-phospho-beta-D-ribosyl)imidazole + S-adenosyl-L-methionine = 4-amino-2-methyl-5-(phosphooxymethyl)pyrimidine + CO + 5'-deoxyadenosine + formate + L-methionine + 3 H(+). The protein operates within cofactor biosynthesis; thiamine diphosphate biosynthesis. Its function is as follows. Catalyzes the synthesis of the hydroxymethylpyrimidine phosphate (HMP-P) moiety of thiamine from aminoimidazole ribotide (AIR) in a radical S-adenosyl-L-methionine (SAM)-dependent reaction. This Nautilia profundicola (strain ATCC BAA-1463 / DSM 18972 / AmH) protein is Phosphomethylpyrimidine synthase.